We begin with the raw amino-acid sequence, 273 residues long: tRNA pseudouridine synthase B (273 aa).

The active-site Nucleophile is Asp-38.

Belongs to the pseudouridine synthase TruB family. Type 1 subfamily.

The enzyme catalyses uridine(55) in tRNA = pseudouridine(55) in tRNA. Its function is as follows. Responsible for synthesis of pseudouridine from uracil-55 in the psi GC loop of transfer RNAs. This Campylobacter concisus (strain 13826) protein is tRNA pseudouridine synthase B.